The sequence spans 215 residues: Putative glycosyltransferase ALG1L2 (215 aa).

A disordered region spans residues 40-66 (PFRARSEPEDPDTERSAFTERDSGSGL). Residues 43 to 62 (ARSEPEDPDTERSAFTERDS) are compositionally biased toward basic and acidic residues.

Belongs to the glycosyltransferase group 1 family.

Functionally, putative glycosyltransferase. This is Putative glycosyltransferase ALG1L2 (ALG1L2) from Homo sapiens (Human).